The following is a 128-amino-acid chain: MAASKDEILESIANMSVMEVVELIEAMEEKFGVTAAAAVAAAPAAGGGGGDEGGAAEEQTEFDVILSSHGDNKVGVIKAVRGVTGLGLKEAKEVVEGCPAPIKEGASKEEADDIKAKLEEAGASVELK.

This sequence belongs to the bacterial ribosomal protein bL12 family. Homodimer. Part of the ribosomal stalk of the 50S ribosomal subunit. Forms a multimeric L10(L12)X complex, where L10 forms an elongated spine to which 2 to 4 L12 dimers bind in a sequential fashion. Binds GTP-bound translation factors.

Its function is as follows. Forms part of the ribosomal stalk which helps the ribosome interact with GTP-bound translation factors. Is thus essential for accurate translation. The protein is Large ribosomal subunit protein bL12 of Halorhodospira halophila (strain DSM 244 / SL1) (Ectothiorhodospira halophila (strain DSM 244 / SL1)).